A 472-amino-acid polypeptide reads, in one-letter code: L-fuculokinase (472 aa).

It belongs to the FGGY kinase family. Requires a divalent metal cation as cofactor.

It carries out the reaction L-fuculose + ATP = L-fuculose 1-phosphate + ADP + H(+). Its pathway is carbohydrate degradation; L-fucose degradation; L-lactaldehyde and glycerone phosphate from L-fucose: step 2/3. Its function is as follows. Catalyzes the phosphorylation of L-fuculose. This chain is L-fuculokinase, found in Salmonella typhi.